A 114-amino-acid polypeptide reads, in one-letter code: Small ribosomal subunit protein uS13m (114 aa).

The segment at 92 to 114 (DGLPLRGQRSHTNARTSRKRIRK) is disordered.

This sequence belongs to the universal ribosomal protein uS13 family. Part of the small ribosomal subunit.

The protein localises to the mitochondrion. Functionally, located at the top of the head of the small subunit, it contacts several helices of the 18S rRNA. This chain is Small ribosomal subunit protein uS13m (RPS13), found in Oenothera berteroana (Bertero's evening primrose).